A 403-amino-acid polypeptide reads, in one-letter code: MASLPCIPSNFKPGSPPRGLPLACKAFGAGASLAAQERWLMPWRDGGLGFSLLLVLAGTRTAEVEGISAAGATSAARRFTAVADAELLLKGPDRPRLCSLPPLPAGISPALISYVAARWIGVDPLVAAVGLTLSPPFPHLRLEVPGMGPAACLSTGEAMGLSRVHALWQRGFCLGRGLRRPLVLAECVPGGTTTAQAVLTGLGLQVADLISGSARQAPMILKQELVDRGLSKAALGFNPPPQRVIAALGDPFQPVAVGLLLGAREAGQPVMLGGGSQMVAVLALALAAMEPSHRQDMVDGIVLGTTSWLAEEAKRSDGRPGALECLIDCVGEFFGVRLLGLATGLRFNNSQHRALQDYELGYVKEGVGAGALALLAQLQGASCEQLLEACDQAMNQLLGTSYS.

The protein belongs to the UPF0284 family.

The sequence is that of UPF0284 protein PMT_1350 from Prochlorococcus marinus (strain MIT 9313).